We begin with the raw amino-acid sequence, 389 residues long: MIIRSLLDTDLYKFTMMQVVLHHFPGAHVEYRFKCRNAGVDLVPFIEEIRAEIRHLCTLRFTDTELDYLRGMRFIKSDFVDFLGLFHLNEKYIDVRPAPSNDGQIEIVIAGPWLHTIMFEVPVLAIVNEVFFSRTQTHPQWEEGKRRLTDKLASLKRPGLEDCRIADYGTRRRFSHTWHEHVLLETHAQLGAQYAGTSNVYFAMKHGMTPLGTMAHEYLQACQALGPRLRDSQTFALETWAKEYRGDLGIALSDTYGFDAFLRDFDMFFCKLFDGVRHDSGDPFEWGERMLKHYDDMRAEPKSKALIFSDSLDMPKVIGLYERFHGRCKLAFGVGTNLTNDLGYTPLQIVIKIVRCNGQPVAKLSDAPEKTMCDDPAYLTYLKQVFGVQ.

H216 carries the phosphohistidine; by autocatalysis modification.

Belongs to the NAPRTase family. In terms of processing, transiently phosphorylated on a His residue during the reaction cycle. Phosphorylation strongly increases the affinity for substrates and increases the rate of nicotinate D-ribonucleotide production. Dephosphorylation regenerates the low-affinity form of the enzyme, leading to product release.

It catalyses the reaction nicotinate + 5-phospho-alpha-D-ribose 1-diphosphate + ATP + H2O = nicotinate beta-D-ribonucleotide + ADP + phosphate + diphosphate. It participates in cofactor biosynthesis; NAD(+) biosynthesis; nicotinate D-ribonucleotide from nicotinate: step 1/1. In terms of biological role, catalyzes the synthesis of beta-nicotinate D-ribonucleotide from nicotinate and 5-phospho-D-ribose 1-phosphate at the expense of ATP. The protein is Nicotinate phosphoribosyltransferase of Ralstonia pickettii (strain 12J).